The primary structure comprises 358 residues: Fructose-bisphosphate aldolase 1, cytoplasmic (358 aa).

Residue arginine 39 coordinates substrate. The active-site Proton acceptor is glutamate 183. The active-site Schiff-base intermediate with dihydroxyacetone-P is the lysine 225. Substrate-binding positions include serine 266–glycine 268 and arginine 298.

This sequence belongs to the class I fructose-bisphosphate aldolase family. As to quaternary structure, homotetramer. As to expression, expressed in callus.

It is found in the cytoplasm. The protein localises to the cytosol. It carries out the reaction beta-D-fructose 1,6-bisphosphate = D-glyceraldehyde 3-phosphate + dihydroxyacetone phosphate. It functions in the pathway carbohydrate degradation; glycolysis; D-glyceraldehyde 3-phosphate and glycerone phosphate from D-glucose: step 4/4. Functionally, fructose-bisphosphate aldolase that plays a key role in glycolysis and gluconeogenesis. Involved in gibberellin-mediated root growth. May be regulated by CDPK13. Associates with vacuolar proton ATPase (V-ATPase) and may regulate the V-ATPase-mediated control of root cell elongation. In Oryza sativa subsp. japonica (Rice), this protein is Fructose-bisphosphate aldolase 1, cytoplasmic.